Reading from the N-terminus, the 575-residue chain is Sodium/hydrogen exchanger 8 (575 aa).

The next 11 helical transmembrane spans lie at Met54–Ile74, Leu78–Ile98, Pro117–His137, Leu150–Leu170, Phe185–Ala205, Leu255–Ile275, Gly305–Met325, Val348–Pro368, Ile373–Pro393, Met411–Leu431, and Thr445–Ile465. A Phosphothreonine modification is found at Thr504. A phosphoserine mark is found at Ser565 and Ser567.

It belongs to the monovalent cation:proton antiporter 1 (CPA1) transporter (TC 2.A.36) family. In terms of tissue distribution, intestine and kidneys.

It is found in the golgi apparatus membrane. Its subcellular location is the golgi apparatus. The protein resides in the trans-Golgi network membrane. The protein localises to the endosome. It localises to the multivesicular body membrane. It is found in the apical cell membrane. Its subcellular location is the cytoplasmic vesicle. The protein resides in the secretory vesicle. The protein localises to the acrosome. It carries out the reaction Na(+)(in) + H(+)(out) = Na(+)(out) + H(+)(in). Expression and activity are regulated by acid media by increasing the rate of trafficking to the apical membrane. Inhibited by HOE694 and S3226. Na(+)/H(+) antiporter. Mediates the electoneutral exchange of intracellular H(+) ions for extracellular Na(+) in 1:1 stoichiometry. Acts as an Na(+)/H(+) exchanger in the trans-Golgi. Contributes to the regulation of pH regulation of Golgi apparatus, and consequently, in protein trafficking and endosomal morphology. In germ cells, plays a crucial role in acrosome biogenesis and sperm development, probably by playing a role in the fusion of the Golgi-derived vesicles that form the acrosomal cap. Can also be active at the cell surface of specialized cells. In the small intestine, at the cell membrane, plays a major physiological role in transepithelial absorption of Na(+) and regulates intracellular pH homeostasis of intestinal epithelial cells. Acts as an important regulator of mucosal integrity in the intestine and in the stomach, could mediate the pH fluctuation necessary for mucin exocytosis or assist membrane trafficking of other proteins. Plays a role in photoreceptor survival and in the maintenance of intracellular pH homeostasis in retinal pigment epithelium (RPE cells). In Rattus norvegicus (Rat), this protein is Sodium/hydrogen exchanger 8 (Slc9a8).